The primary structure comprises 267 residues: Ribosyldihydronicotinamide dehydrogenase-like protein traD (267 aa).

FAD contacts are provided by residues His9, 15-16 (LN), and 100-103 (LWWF). Substrate is bound at residue 122–124 (GHG). Residues 152–155 (TLGG) and Tyr160 each bind FAD.

Belongs to the NAD(P)H dehydrogenase (quinone) family. In terms of assembly, homodimer. FAD serves as cofactor.

The protein operates within secondary metabolite biosynthesis. Its function is as follows. Ribosyldihydronicotinamide dehydrogenase-like protein; part of the tra gene cluster that produces terrestric acid. The clavatol biosynthesis cluster cla and the terrestric acid cluster tra are both involved in the production of peniphenones and penilactones. The non-reducing PKS claF is responsible for the formation of clavatol from successive condensations of 3 malonyl-CoA units, presumably with a simple acetyl-CoA starter unit, and 2 methylation steps. The esterase claE probably collaborates with claF by catalyzing the hydrolysis of ACP-bound acyl intermediates to free the ACP from stalled intermediates. The clavatol oxidase claD then converts clavatol to hydroxyclavatol. Spontaneous dehydration of hydroxyclavatol leads to the accumulation of the highly active ortho-quinone methide. On the other hand, the PKS-NRPS hybrid traA is involved in the formation of crustosic acid, with the help of traB and traD. The polyketide synthase module (PKS) of traA is responsible for the synthesis of the polyketide backbone via the condensation of an acetyl-CoA starter unit with 3 malonyl-CoA units. The downstream nonribosomal peptide synthetase (NRPS) module then amidates the carboxyl end of the polyketide with L-malic acid. Because traA lacks a designated enoylreductase (ER) domain, the required activity is provided the enoyl reductase traG. Crustosic acid undergoes decarboxylation and isomerization to the terrestric acid, catalyzed by the 2-oxoglutarate-dependent dioxygenase traH. Both acids are further converted to the 2 gamma-butyrolactones (R)-5-methyltetronic acid and (S)-5-carboxylmethyltetronic acid, with involvement of the cytochrome P450 monooxygenase claJ. Spontaneous addition of the methide to these gamma-butyrolactones leads to peniphenone D and penilactone D, which undergo again stereospecific attacking by methide to give penilactones A and B. The sequence is that of Ribosyldihydronicotinamide dehydrogenase-like protein traD from Penicillium crustosum (Blue mold fungus).